A 263-amino-acid chain; its full sequence is Hydroxyethylthiazole kinase 1 (263 aa).

Substrate is bound at residue M42. Residues K118 and T164 each coordinate ATP. Residue G191 coordinates substrate.

Belongs to the Thz kinase family. The cofactor is Mg(2+).

The enzyme catalyses 5-(2-hydroxyethyl)-4-methylthiazole + ATP = 4-methyl-5-(2-phosphooxyethyl)-thiazole + ADP + H(+). Its pathway is cofactor biosynthesis; thiamine diphosphate biosynthesis; 4-methyl-5-(2-phosphoethyl)-thiazole from 5-(2-hydroxyethyl)-4-methylthiazole: step 1/1. In terms of biological role, catalyzes the phosphorylation of the hydroxyl group of 4-methyl-5-beta-hydroxyethylthiazole (THZ). This chain is Hydroxyethylthiazole kinase 1, found in Clostridium botulinum (strain Okra / Type B1).